Consider the following 332-residue polypeptide: Probable cytosolic iron-sulfur protein assembly protein 1 (332 aa).

7 WD repeats span residues 9-48 (GHTD…LVTT), 52-93 (GHNR…WQFL), 98-137 (GHEN…DEFE), 144-183 (DHTQ…WICV), 188-230 (GHES…GGTG), 257-295 (AHTR…QWVV), and 302-332 (AHGV…IWEV).

Belongs to the WD repeat CIA1 family. Interacts with NAR1.

The protein resides in the cytoplasm. Its subcellular location is the nucleus. Its function is as follows. Essential component of the cytosolic iron-sulfur (Fe/S) protein assembly machinery. Required for the maturation of extramitochondrial Fe/S proteins. The sequence is that of Probable cytosolic iron-sulfur protein assembly protein 1 from Yarrowia lipolytica (strain CLIB 122 / E 150) (Yeast).